The primary structure comprises 152 residues: Ubiquitin-conjugating enzyme E2 2 (152 aa).

The 147-residue stretch at 4 to 150 folds into the UBC core domain; it reads PARKRLMRDF…VREVVEQSWT (147 aa). Cys-88 serves as the catalytic Glycyl thioester intermediate.

This sequence belongs to the ubiquitin-conjugating enzyme family.

The enzyme catalyses S-ubiquitinyl-[E1 ubiquitin-activating enzyme]-L-cysteine + [E2 ubiquitin-conjugating enzyme]-L-cysteine = [E1 ubiquitin-activating enzyme]-L-cysteine + S-ubiquitinyl-[E2 ubiquitin-conjugating enzyme]-L-cysteine.. The protein operates within protein modification; protein ubiquitination. Catalyzes the covalent attachment of ubiquitin to other proteins. In Triticum aestivum (Wheat), this protein is Ubiquitin-conjugating enzyme E2 2 (UBC2).